A 270-amino-acid chain; its full sequence is Fluoride-specific ion channel FluC 2 (270 aa).

4 helical membrane-spanning segments follow: residues I4 to L24, L35 to Y55, I67 to V87, and A96 to L116. Na(+) is bound by residues G74 and S77.

It belongs to the fluoride channel Fluc/FEX (TC 1.A.43) family.

The protein resides in the cell inner membrane. It carries out the reaction fluoride(in) = fluoride(out). Its activity is regulated as follows. Na(+) is not transported, but it plays an essential structural role and its presence is essential for fluoride channel function. In terms of biological role, fluoride-specific ion channel. Important for reducing fluoride concentration in the cell, thus reducing its toxicity. The sequence is that of Fluoride-specific ion channel FluC 2 from Brucella melitensis biotype 1 (strain ATCC 23456 / CCUG 17765 / NCTC 10094 / 16M).